The following is a 399-amino-acid chain: Elongation factor Tu (399 aa).

Positions 10–209 (KPHVNIGTIG…AVDDYIPTPV (200 aa)) constitute a tr-type G domain. The segment at 19–26 (GHVDHGKT) is G1. Position 19–26 (19–26 (GHVDHGKT)) interacts with GTP. Threonine 26 is a binding site for Mg(2+). Positions 62 to 66 (GITIN) are G2. The G3 stretch occupies residues 83–86 (DCPG). Residues 83-87 (DCPGH) and 138-141 (NKCD) contribute to the GTP site. Residues 138-141 (NKCD) are G4. The segment at 175 to 177 (SAY) is G5.

This sequence belongs to the TRAFAC class translation factor GTPase superfamily. Classic translation factor GTPase family. EF-Tu/EF-1A subfamily. In terms of assembly, monomer.

It is found in the cytoplasm. It catalyses the reaction GTP + H2O = GDP + phosphate + H(+). GTP hydrolase that promotes the GTP-dependent binding of aminoacyl-tRNA to the A-site of ribosomes during protein biosynthesis. This Bifidobacterium longum (strain DJO10A) protein is Elongation factor Tu.